The sequence spans 132 residues: Ribonuclease P protein component 4 (132 aa).

Zn(2+) contacts are provided by Cys-67, Cys-70, Cys-96, and Cys-99.

It belongs to the eukaryotic/archaeal RNase P protein component 4 family. As to quaternary structure, consists of a catalytic RNA component and at least 4-5 protein subunits. The cofactor is Zn(2+).

Its subcellular location is the cytoplasm. It carries out the reaction Endonucleolytic cleavage of RNA, removing 5'-extranucleotides from tRNA precursor.. Part of ribonuclease P, a protein complex that generates mature tRNA molecules by cleaving their 5'-ends. This chain is Ribonuclease P protein component 4, found in Thermococcus kodakarensis (strain ATCC BAA-918 / JCM 12380 / KOD1) (Pyrococcus kodakaraensis (strain KOD1)).